We begin with the raw amino-acid sequence, 363 residues long: Ethanolamine kinase 1 (363 aa).

It belongs to the choline/ethanolamine kinase family.

The protein localises to the cytoplasm. The catalysed reaction is ethanolamine + ATP = phosphoethanolamine + ADP + H(+). It functions in the pathway phospholipid metabolism; phosphatidylethanolamine biosynthesis; phosphatidylethanolamine from ethanolamine: step 1/3. In terms of biological role, highly specific for ethanolamine phosphorylation. May be a rate-controlling step in phosphatidylethanolamine biosynthesis. This is Ethanolamine kinase 1 (Etnk1) from Mus musculus (Mouse).